Consider the following 645-residue polypeptide: MPQKAQPQPRESPFKPARQQPGLACEECRKRKARCDRAKPQCGSCMMTGRVCVVNHNRPRRGPKKGQIESLYSRLGRFIHGSLCISCWKAGMLTVTEVLEEQVIEQMEHIYHPDFEPNSHPRHSQSHDRRQQSGPDSSPDTQHELPFLQSPPAARDADSAERALLPSPVSPVRAMTAQELSYARTGSNPTQNPGLDLILADLDQLYFDRVHPIAPFLHQQRHLSQREAESSVLARACLRSAMRTVAAAMSAQYRRFADSLYIETSRVVQELDTIERTPSLKQIQAVLLLAHYELLRMEENRALATVGRCFRLIQLARLQDTDPSTDAGAGRDFVKEEETRRTFWVAYCFDRFLTSRNEWPFTLQEEAIWIRLPVSESAFQIPRPPEQPMDYLHEAIASSGQKTLPPFAEYIVLATLHGRTMNLRRSALLLSTSTEASMFWERHRALSDIVEKRSALWSYSPSATTPLVTADPLTAFTCLLEKTLIIYLGKVGQTAREQLGGMSERRLIENANSAVQNLATSEQETLMNCHSHSRSFDIGTGGRGGHASGGLQRSAQTAAEFVALAKFMCPVNCFRICSDKSVRRLTLSFQMQYPAQQSFLLRMEMPPRLEKYGMNVGERGTGRIRAIDHASRLKVDERRAVRAYL.

Residues 1–21 (MPQKAQPQPRESPFKPARQQP) form a disordered region. The zn(2)-C6 fungal-type DNA-binding region spans 25–52 (CEECRKRKARCDRAKPQCGSCMMTGRVC). Over residues 113–131 (PDFEPNSHPRHSQSHDRRQ) the composition is skewed to basic and acidic residues. A disordered region spans residues 113–170 (PDFEPNSHPRHSQSHDRRQQSGPDSSPDTQHELPFLQSPPAARDADSAERALLPSPVS).

The protein localises to the nucleus. In terms of biological role, transcription factors AN6788 and AN6790 act in tandem to regulate the expression of the non-reducing polyketide synthase pkfA from the aspernidine A biosynthesis cluster. They do not control the expression of the other genes involved in aspernidine A biosynthesis, nor do they regulate the expression of the highly reducing polyketide synthase AN6791 and the esterase AN6793 with which they are predicted to form a secondary metabolite biosynthesis cluster. In Emericella nidulans (strain FGSC A4 / ATCC 38163 / CBS 112.46 / NRRL 194 / M139) (Aspergillus nidulans), this protein is Transcription factor AN6788.